Here is a 136-residue protein sequence, read N- to C-terminus: uncharacterized protein (136 aa).

Disordered stretches follow at residues 58-82 and 112-136; these read TSDD…TTQT and NNPK…VVTQ.

This is an uncharacterized protein from Dictyostelium discoideum (Social amoeba).